A 174-amino-acid chain; its full sequence is Balbiani ring protein 1 (174 aa).

The disordered stretch occupies residues Lys-28–Arg-174. Tandem repeats lie at residues Glu-42–Glu-52, Lys-53–Glu-63, Lys-64–Glu-74, Lys-75–Glu-85, Glu-124–Glu-134, Lys-135–Glu-145, Lys-146–Glu-156, and Lys-157–Glu-167. 2 4 X 11 AA tandem repeats regions span residues Glu-42–Glu-85 and Glu-124–Glu-167. 2 stretches are compositionally biased toward basic and acidic residues: residues Pro-49–Ala-100 and Arg-121–Ser-159.

Salivary gland.

The protein resides in the secreted. Its function is as follows. Used by the larvae to construct a supramolecular structure, the larval tube. The protein is Balbiani ring protein 1 (BR1) of Chironomus tentans (Midge).